The following is a 259-amino-acid chain: Glucosamine-6-phosphate deaminase (259 aa).

Residue Asp66 is the Proton acceptor; for enolization step of the active site. Residue Asp135 is the For ring-opening step of the active site. His137 functions as the Proton acceptor; for ring-opening step in the catalytic mechanism. Glu142 (for ring-opening step) is an active-site residue.

It belongs to the glucosamine/galactosamine-6-phosphate isomerase family. NagB subfamily.

It carries out the reaction alpha-D-glucosamine 6-phosphate + H2O = beta-D-fructose 6-phosphate + NH4(+). It participates in amino-sugar metabolism; N-acetylneuraminate degradation; D-fructose 6-phosphate from N-acetylneuraminate: step 5/5. In terms of biological role, catalyzes the reversible isomerization-deamination of glucosamine 6-phosphate (GlcN6P) to form fructose 6-phosphate (Fru6P) and ammonium ion. The sequence is that of Glucosamine-6-phosphate deaminase from Rhodococcus opacus (strain B4).